A 238-amino-acid polypeptide reads, in one-letter code: Uracil-DNA glycosylase (238 aa).

The Proton acceptor role is filled by Asp-72.

The protein belongs to the uracil-DNA glycosylase (UDG) superfamily. UNG family.

Its subcellular location is the cytoplasm. The enzyme catalyses Hydrolyzes single-stranded DNA or mismatched double-stranded DNA and polynucleotides, releasing free uracil.. In terms of biological role, excises uracil residues from the DNA which can arise as a result of misincorporation of dUMP residues by DNA polymerase or due to deamination of cytosine. The sequence is that of Uracil-DNA glycosylase from Chromobacterium violaceum (strain ATCC 12472 / DSM 30191 / JCM 1249 / CCUG 213 / NBRC 12614 / NCIMB 9131 / NCTC 9757 / MK).